We begin with the raw amino-acid sequence, 152 residues long: Nucleoside diphosphate kinase A (152 aa).

Lysine 12, phenylalanine 60, arginine 88, and threonine 94 together coordinate ATP. A Glycyl lysine isopeptide (Lys-Gly) (interchain with G-Cter in ubiquitin) cross-link involves residue lysine 100. Positions 105 and 115 each coordinate ATP. Histidine 118 serves as the catalytic Pros-phosphohistidine intermediate. Phosphoserine occurs at positions 120, 122, and 125.

This sequence belongs to the NDK family. Hexamer of two different chains: An and B (A6, A5B, A4B2, A3B3, A2B4, AB5, B6). Interacts with PRUNE1. Component of the SET complex, composed of at least ANP32A, APEX1, HMGB2, NME1, SET and TREX1. Within this complex, interacts directly with SET. Also interacts with TREX1, but only following translocation to the nucleus. Mg(2+) is required as a cofactor.

Its subcellular location is the cytoplasm. It localises to the nucleus. It carries out the reaction a 2'-deoxyribonucleoside 5'-diphosphate + ATP = a 2'-deoxyribonucleoside 5'-triphosphate + ADP. The enzyme catalyses a ribonucleoside 5'-diphosphate + ATP = a ribonucleoside 5'-triphosphate + ADP. Autophosphorylation at His-118 increases serine/threonine protein kinase activity of the enzyme. Interaction with the SET complex inhibits exonuclease activity. In terms of biological role, major role in the synthesis of nucleoside triphosphates other than ATP. The ATP gamma phosphate is transferred to the NDP beta phosphate via a ping-pong mechanism, using a phosphorylated active-site intermediate. Possesses nucleoside-diphosphate kinase, serine/threonine-specific protein kinase, geranyl and farnesyl pyrophosphate kinase, histidine protein kinase and 3'-5' exonuclease activities. Involved in cell proliferation, differentiation and development, signal transduction, G protein-coupled receptor endocytosis, and gene expression. Required for neural development including neural patterning and cell fate determination. During GZMA-mediated cell death, works in concert with TREX1. NME1 nicks one strand of DNA and TREX1 removes bases from the free 3' end to enhance DNA damage and prevent DNA end reannealing and rapid repair. The polypeptide is Nucleoside diphosphate kinase A (Nme1) (Rattus norvegicus (Rat)).